The following is a 310-amino-acid chain: Phosphoribosylaminoimidazole-succinocarboxamide synthase (310 aa).

The protein belongs to the SAICAR synthetase family.

It catalyses the reaction 5-amino-1-(5-phospho-D-ribosyl)imidazole-4-carboxylate + L-aspartate + ATP = (2S)-2-[5-amino-1-(5-phospho-beta-D-ribosyl)imidazole-4-carboxamido]succinate + ADP + phosphate + 2 H(+). The protein operates within purine metabolism; IMP biosynthesis via de novo pathway; 5-amino-1-(5-phospho-D-ribosyl)imidazole-4-carboxamide from 5-amino-1-(5-phospho-D-ribosyl)imidazole-4-carboxylate: step 1/2. This Cytophaga hutchinsonii (strain ATCC 33406 / DSM 1761 / CIP 103989 / NBRC 15051 / NCIMB 9469 / D465) protein is Phosphoribosylaminoimidazole-succinocarboxamide synthase.